Reading from the N-terminus, the 218-residue chain is Cytochrome b6 (218 aa).

Residues 35-55 (IFYCLGGITLVCFLIQFATGF) traverse the membrane as a helical segment. A heme c-binding site is contributed by C38. Residues H89 and H103 each contribute to the heme b site. 3 helical membrane-spanning segments follow: residues 93–113 (ASMMVLMLILHVFRVYLTGGF), 119–139 (LTWVTGVVMAVITVAFGVTGY), and 189–209 (LHTFVLPWSLAVFMLMHFLMI). Heme b is bound by residues H190 and H205.

The protein belongs to the cytochrome b family. PetB subfamily. As to quaternary structure, the 4 large subunits of the cytochrome b6-f complex are cytochrome b6, subunit IV (17 kDa polypeptide, PetD), cytochrome f and the Rieske protein, while the 4 small subunits are PetG, PetL, PetM and PetN. The complex functions as a dimer. The cofactor is heme b. Heme c serves as cofactor.

It is found in the cellular thylakoid membrane. Component of the cytochrome b6-f complex, which mediates electron transfer between photosystem II (PSII) and photosystem I (PSI), cyclic electron flow around PSI, and state transitions. The sequence is that of Cytochrome b6 from Prochlorococcus marinus (strain MIT 9301).